Consider the following 648-residue polypeptide: Macrolide export ATP-binding/permease protein MacB (648 aa).

Positions Leu5–Thr243 constitute an ABC transporter domain. Gly41–Ser48 contributes to the ATP binding site. A run of 5 helical transmembrane segments spans residues Leu273 to Gly293, Ala417 to Ala437, Leu523 to Ile543, Leu578 to Leu598, and Leu611 to Leu631.

Belongs to the ABC transporter superfamily. Macrolide exporter (TC 3.A.1.122) family. Homodimer. Part of the tripartite efflux system MacAB-TolC, which is composed of an inner membrane transporter, MacB, a periplasmic membrane fusion protein, MacA, and an outer membrane component, TolC. The complex forms a large protein conduit and can translocate molecules across both the inner and outer membranes. Interacts with MacA.

The protein resides in the cell inner membrane. Part of the tripartite efflux system MacAB-TolC. MacB is a non-canonical ABC transporter that contains transmembrane domains (TMD), which form a pore in the inner membrane, and an ATP-binding domain (NBD), which is responsible for energy generation. Confers resistance against macrolides. The sequence is that of Macrolide export ATP-binding/permease protein MacB from Salmonella paratyphi A (strain ATCC 9150 / SARB42).